The sequence spans 370 residues: Histidinol-phosphate aminotransferase 1 (370 aa).

An N6-(pyridoxal phosphate)lysine modification is found at Lys-222.

The protein belongs to the class-II pyridoxal-phosphate-dependent aminotransferase family. Histidinol-phosphate aminotransferase subfamily. Homodimer. It depends on pyridoxal 5'-phosphate as a cofactor.

It carries out the reaction L-histidinol phosphate + 2-oxoglutarate = 3-(imidazol-4-yl)-2-oxopropyl phosphate + L-glutamate. The protein operates within amino-acid biosynthesis; L-histidine biosynthesis; L-histidine from 5-phospho-alpha-D-ribose 1-diphosphate: step 7/9. This is Histidinol-phosphate aminotransferase 1 (hisC1) from Bacillus cereus (strain ATCC 14579 / DSM 31 / CCUG 7414 / JCM 2152 / NBRC 15305 / NCIMB 9373 / NCTC 2599 / NRRL B-3711).